Consider the following 473-residue polypeptide: Probable cytosolic iron-sulfur protein assembly protein 1 (473 aa).

The segment at 1 to 25 is disordered; it reads MPSSTPGGSLKHLSDLTPPSQDRTW. WD repeat units lie at residues 11-58 and 62-104; these read KHLS…LLST and GHKR…GRAE. Positions 112-133 are disordered; that stretch reads GGLAEADRQEGDDTDGDEEDED. Positions 123–133 are enriched in acidic residues; it reads DDTDGDEEDED. WD repeat units follow at residues 144–183, 191–230, 235–313, and 341–380; these read GHDSEVKSVSWSSGGSLLATCSRDKSIWIWEDLEDGDNNF, EHSGDVKWVAWHPEEECLASGSYDDTIRLWREDVDDWGQV, GHEG…KPPP, and MHDLSIYSVAWSKKTGLIASTGADGRIVIYQERFTSKPPV. The interval 377–405 is disordered; it reads KPPVHTTSEQDKPDSARETQKANGERTAP. Basic and acidic residues predominate over residues 384-400; the sequence is SEQDKPDSARETQKANG. One copy of the WD 7 repeat lies at 438–473; the sequence is SQQQNFDNSEMDHANEEEVLLSTGDDGVVRVWTLER.

It belongs to the WD repeat CIA1 family.

Essential component of the cytosolic iron-sulfur (Fe/S) protein assembly machinery. Required for the maturation of extramitochondrial Fe/S proteins. The chain is Probable cytosolic iron-sulfur protein assembly protein 1 from Coccidioides immitis (strain RS) (Valley fever fungus).